A 565-amino-acid chain; its full sequence is Carboxylesterase 1D (565 aa).

An N-terminal signal peptide occupies residues 1-18 (MGLYPLIWLSLAACTAWG). Asn79 carries an N-linked (GlcNAc...) asparagine glycan. Cys87 and Cys116 are disulfide-bonded. Ser221 (acyl-ester intermediate) is an active-site residue. A disulfide bridge connects residues Cys273 and Cys284. Glu353 acts as the Charge relay system in catalysis. Residue Lys382 is modified to N6-succinyllysine. His466 serves as the catalytic Charge relay system. Residue Asn489 is glycosylated (N-linked (GlcNAc...) asparagine). The short motif at 562–565 (HVEL) is the Prevents secretion from ER element.

This sequence belongs to the type-B carboxylesterase/lipase family. In terms of assembly, homotrimer. In terms of tissue distribution, highest expression occurs in liver with lower levels in adipose tissue, kidney, heart, intestine, lung, testis and thymus.

The protein resides in the endoplasmic reticulum lumen. It is found in the cytoplasm. It localises to the cytosol. The protein localises to the lipid droplet. Its subcellular location is the microsome. The catalysed reaction is a carboxylic ester + H2O = an alcohol + a carboxylate + H(+). The enzyme catalyses a long-chain fatty acyl ethyl ester + H2O = a long-chain fatty acid + ethanol + H(+). It catalyses the reaction all-trans-retinyl hexadecanoate + H2O = all-trans-retinol + hexadecanoate + H(+). In terms of biological role, major lipase in white adipose tissue. Involved in the metabolism of xenobiotics and of natural substrates. Hydrolyzes triacylglycerols and monoacylglycerols, with a preference for monoacylglycerols. The susceptibility of the substrate increases with decreasing acyl chain length of the fatty acid moiety. Catalyzes the synthesis of fatty acid ethyl esters. Hydrolyzes retinyl esters. This chain is Carboxylesterase 1D, found in Mus musculus (Mouse).